The chain runs to 187 residues: UPF0398 protein LJ_1195 (187 aa).

Belongs to the UPF0398 family.

The polypeptide is UPF0398 protein LJ_1195 (Lactobacillus johnsonii (strain CNCM I-12250 / La1 / NCC 533)).